The chain runs to 140 residues: uncharacterized protein (140 aa).

The next 2 helical transmembrane spans lie at Tyr26 to Ile43 and Leu64 to Leu86.

This sequence belongs to the bacteriophage holin family. Cp-1 holin subfamily.

It is found in the cell membrane. This is an uncharacterized protein from Bacillus subtilis (strain 168).